Reading from the N-terminus, the 94-residue chain is Lipolysis-activating peptide 1-beta chain (94 aa).

The first 19 residues, 1-19, serve as a signal peptide directing secretion; the sequence is MKILAVVLISVIVLNTANG. The region spanning 20–87 is the LCN-type CS-alpha/beta domain; that stretch reads ENYYPQKYTN…FFNALESQCP (68 aa). 3 disulfide bridges follow: cysteine 34/cysteine 56, cysteine 42/cysteine 66, and cysteine 46/cysteine 68.

This sequence belongs to the long (3 C-C) scorpion toxin superfamily. Homodimer; disulfide-linked or monomer (edited version) or heterodimer of an alpha chain (AC D9U299 or AC D9U2A4) and this beta chain (non-edited version). As to expression, expressed by the venom gland.

The protein resides in the secreted. The homodimer inhibits HMG-CoA reductase (HMGCR) (32% of inhibition produced by 0.6 uM), a glycoprotein involved in the control of cholesterol biosynthesis. The inhibitory effects of bumarsin are seen at much lower concentrations (0.6 uM) than that for statins such as atorvastatin (5 mM) and simvastatin (10 uM). In addition to inhibition of HMG-CoA reductase, this protein lowers cholesterol levels by inducing steroid hormone synthesis via StAR, and by increasing reverse cholesterol transport mediated by the induction of ABCA1 and APOA1. Functionally, the heterodimer non-edited LVP1 induces lipolysis in rat adipocytes. Induction of lipolysis by LVP1 appears to be mediated through the beta-2 adrenergic receptor pathway (ADRB2). Its function is as follows. The monomer edited version, similar to alpha-toxins, may modulate voltage-gated sodium channels (Nav) and may block voltage-gated potassium channels (Kv). In Lychas mucronatus (Chinese swimming scorpion), this protein is Lipolysis-activating peptide 1-beta chain.